The sequence spans 330 residues: Embigin (330 aa).

The N-terminal stretch at 1 to 33 (MRSHTGLRALVAPGYPLLLLCLLAATRPDPAEG) is a signal peptide. Over 34–254 (DPTDPTFTSL…QLGESEEQNE (221 aa)) the chain is Extracellular. Ig-like V-type domains follow at residues 38-161 (PTFT…IHVP) and 162-256 (KAHG…NELV). N-linked (GlcNAc...) asparagine glycosylation is found at Asn55, Asn62, Asn70, Asn101, Asn118, Asn191, Asn198, Asn216, and Asn221. 2 cysteine pairs are disulfide-bonded: Cys89–Cys145 and Cys182–Cys240. A helical membrane pass occupies residues 255–283 (LVVLSFLVPLKPFLAILAEVILLVAIILL). The Cytoplasmic segment spans residues 284–330 (CEVYTHKKKNDPDAGKEFEQIEQLKSDDSNGIENNVPRYRKTDSADQ). Residues 293–311 (NDPDAGKEFEQIEQLKSDD) show a composition bias toward basic and acidic residues. The interval 293 to 330 (NDPDAGKEFEQIEQLKSDDSNGIENNVPRYRKTDSADQ) is disordered. Position 312 is a phosphoserine (Ser312).

Interacts with SLC16A1, SLC16A6 and SLC16A7. As to expression, only member of the immunoglobulin superfamily to be expressed in embryonal carcinoma cells, which resemble multipotential cells of early embryos.

It localises to the cell membrane. The protein resides in the synapse. Its function is as follows. Plays a role in targeting the monocarboxylate transporters SLC16A1, SLC16A6 and SLC16A7 to the cell membrane. Plays a role in the outgrowth of motoneurons and in the formation of neuromuscular junctions. Following muscle denervation, promotes nerve terminal sprouting and the formation of additional acetylcholine receptor clusters at synaptic sites without affecting terminal Schwann cell number or morphology. Delays the retraction of terminal sprouts following re-innervation of denervated endplates. The sequence is that of Embigin (Emb) from Mus musculus (Mouse).